Consider the following 321-residue polypeptide: Glucokinase (321 aa).

8–13 is a binding site for ATP; that stretch reads GDVGGT.

Belongs to the bacterial glucokinase family.

It localises to the cytoplasm. It catalyses the reaction D-glucose + ATP = D-glucose 6-phosphate + ADP + H(+). This chain is Glucokinase, found in Cronobacter sakazakii (strain ATCC BAA-894) (Enterobacter sakazakii).